A 436-amino-acid chain; its full sequence is ATP-dependent protease ATPase subunit HslU (436 aa).

Residues V18, 60–65, D249, E314, and R386 each bind ATP; that span reads GVGKTE.

The protein belongs to the ClpX chaperone family. HslU subfamily. As to quaternary structure, a double ring-shaped homohexamer of HslV is capped on each side by a ring-shaped HslU homohexamer. The assembly of the HslU/HslV complex is dependent on binding of ATP.

It is found in the cytoplasm. Its function is as follows. ATPase subunit of a proteasome-like degradation complex; this subunit has chaperone activity. The binding of ATP and its subsequent hydrolysis by HslU are essential for unfolding of protein substrates subsequently hydrolyzed by HslV. HslU recognizes the N-terminal part of its protein substrates and unfolds these before they are guided to HslV for hydrolysis. The polypeptide is ATP-dependent protease ATPase subunit HslU (Rhizobium rhizogenes (strain K84 / ATCC BAA-868) (Agrobacterium radiobacter)).